The sequence spans 222 residues: Ribonuclease 3 (222 aa).

Residues 1–19 form the signal peptide; sequence MKFFIFILALQQLYVQSFA. Residue Gln-30 coordinates RNA. Cys-36 and Cys-42 form a disulfide bridge. RNA is bound by residues His-57, Phe-107, 110–111, and 114–115; these read HE and KH. His-57 functions as the Proton donor in the catalytic mechanism. Cystine bridges form between Cys-72-Cys-118, Cys-178-Cys-213, and Cys-194-Cys-205. Glu-111 is an active-site residue. His-115 acts as the Proton acceptor in catalysis.

It belongs to the RNase T2 family.

It catalyses the reaction a ribonucleotidyl-ribonucleotide-RNA + H2O = a 3'-end 3'-phospho-ribonucleotide-RNA + a 5'-end dephospho-ribonucleoside-RNA + H(+). Its function is as follows. May remobilize phosphate, particularly when cells senesce or when phosphate becomes limiting. This Arabidopsis thaliana (Mouse-ear cress) protein is Ribonuclease 3 (RNS3).